A 472-amino-acid chain; its full sequence is Sodium-coupled neutral amino acid transporter 5 (472 aa).

Met-1 carries the N-acetylmethionine modification. Over 1–48 the chain is Cytoplasmic; it reads MELQDPKMNGALPSDAVGYRQEREGFLPSRGPAPGSKPVQFMDFEGKT. The chain crosses the membrane as a helical span at residues 49–71; that stretch reads SFGMSVFNLSNAIMGSGILGLAY. Residues 72–87 lie on the Extracellular side of the membrane; that stretch reads AMAHTGVIFFLALLLC. Residues 88-108 form a helical membrane-spanning segment; the sequence is IALLSSYSIHLLLTCAGIAGI. Residues 109–125 lie on the Cytoplasmic side of the membrane; the sequence is RAYEQLGQRAFGPAGKV. A helical transmembrane segment spans residues 126–146; sequence VVATVICLHNVGAMSSYLFII. Topologically, residues 147–166 are extracellular; that stretch reads KSELPLVIGTFLYMDPEGDW. A helical transmembrane segment spans residues 167–187; it reads FLKGNLLIIIVSVLIILPLAL. Residues 188–192 are Cytoplasmic-facing; the sequence is MKHLG. Residues 193-213 form a helical membrane-spanning segment; it reads YLGYTSGLSLTCMLFFLVSVI. The Extracellular portion of the chain corresponds to 214 to 257; that stretch reads YKKFQLGCAIGHNETAMESEALVGLPSQGLNSSCEAQMFTVDSQ. A disulfide bridge connects residues Cys-221 and Cys-247. A glycan (N-linked (GlcNAc...) asparagine) is linked at Asn-226. The helical transmembrane segment at 258–278 threads the bilayer; the sequence is MSYTVPIMAFAFVCHPEVLPI. At 279 to 295 the chain is on the cytoplasmic side; that stretch reads YTELCRPSKRRMQAVAN. Residues 296–316 form a helical membrane-spanning segment; the sequence is VSIGAMFCMYGLTATFGYLTF. The Extracellular portion of the chain corresponds to 317–334; that stretch reads YSSVKAEMLHMYSQKDPL. The chain crosses the membrane as a helical span at residues 335–355; it reads ILCVRLAVLLAVTLTVPVVLF. Residues 356–376 are Cytoplasmic-facing; sequence PIRRALQQLLFPGKAFSWPRH. Residues 377–397 form a helical membrane-spanning segment; that stretch reads VAIALILLVLVNVLVICVPTI. Topologically, residues 398–399 are extracellular; that stretch reads RD. The helical transmembrane segment at 400–420 threads the bilayer; the sequence is IFGVIGSTSAPSLIFILPSIF. Over 421-439 the chain is Cytoplasmic; that stretch reads YLRIVPSEVEPFLSWPKIQ. The helical transmembrane segment at 440-460 threads the bilayer; it reads ALCFGVLGVLFMAVSLGFMFA. Residues 461–472 are Extracellular-facing; the sequence is NWATGQSRMSGH.

The protein belongs to the amino acid/polyamine transporter 2 family. In terms of tissue distribution, predominantly expressed in stomach, brain, liver, lung and intestinal tract.

The protein localises to the cell membrane. It catalyses the reaction L-serine(out) + Na(+)(out) + H(+)(in) = L-serine(in) + Na(+)(in) + H(+)(out). The catalysed reaction is L-alanine(out) + Na(+)(out) + H(+)(in) = L-alanine(in) + Na(+)(in) + H(+)(out). It carries out the reaction glycine(out) + Na(+)(out) + H(+)(in) = glycine(in) + Na(+)(in) + H(+)(out). The enzyme catalyses L-glutamine(out) + Na(+)(out) + H(+)(in) = L-glutamine(in) + Na(+)(in) + H(+)(out). It catalyses the reaction L-asparagine(out) + Na(+)(out) + H(+)(in) = L-asparagine(in) + Na(+)(in) + H(+)(out). The catalysed reaction is L-histidine(out) + Na(+)(out) + H(+)(in) = L-histidine(in) + Na(+)(in) + H(+)(out). It carries out the reaction L-cysteine(out) + Na(+)(out) + H(+)(in) = L-cysteine(in) + Na(+)(in) + H(+)(out). Its activity is regulated as follows. Not inhibited by lithium. Partial allosteric regulation on ions sodium binding. Functionally, symporter that cotransports neutral amino acids and sodium ions, coupled to an H(+) antiporter activity. Releases L-glutamine and glycine from astroglial cells and may participate in the glutamate/GABA-L-glutamine cycle and the NMDA receptors activation. In addition, contributes significantly to L-glutamine uptake in retina, namely in ganglion and Mueller cells therefore, participates in the retinal glutamate-glutamine cycle. The transport activity is pH sensitive and Li(+) tolerant. Moreover functions in both direction and is associated with large uncoupled fluxes of protons. The transport is electroneutral coupled to the cotransport of 1 Na(+) and the antiport of 1 H(+). May have a particular importance for modulation of net hepatic glutamine flux. The chain is Sodium-coupled neutral amino acid transporter 5 (SLC38A5) from Homo sapiens (Human).